A 250-amino-acid polypeptide reads, in one-letter code: PTB-containing, cubilin and LRP1-interacting protein (250 aa).

One can recognise a PID domain in the interval 93–250; sequence VTYLGKVSTT…VSQELESDDG (158 aa). Positions 229–250 are disordered; sequence DGRIHSNSSSEEVSQELESDDG. A phosphoserine mark is found at serine 236 and serine 247. Positions 241-250 are enriched in acidic residues; that stretch reads VSQELESDDG.

Found in a complex with PID1/PCLI1, LRP1 and CUBNI. Interacts with LRP1 and CUBN. As to expression, expressed in subcutaneous fat, heart, skeletal muscle, brain, colon, thymus, spleen, kidney, liver, small intestine, placenta, lung and peripheral blood leukocyte.

It is found in the cytoplasm. Increases proliferation of preadipocytes without affecting adipocytic differentiation. The chain is PTB-containing, cubilin and LRP1-interacting protein (PID1) from Homo sapiens (Human).